The chain runs to 686 residues: Protein MxiA (686 aa).

Transmembrane regions (helical) follow at residues 28 to 52 (LIIPLPTYLVDFLIGLNIVLAILVF), 105 to 129 (FVIGDSLAVGFVIFSIVTVVQFIVI), 197 to 216 (AIAGIIIIFVNLIGGISVGM), 232 to 256 (ILTIGDGLVSQIPALLISISAGFIV), 274 to 292 (IFGNPFVLIVTSALALAIG), and 299 to 315 (FFVFFLIAVTLTALFYY).

This sequence belongs to the FHIPEP (flagella/HR/invasion proteins export pore) family.

It localises to the cell inner membrane. In terms of biological role, necessary for the secretion of IPA invasins. The chain is Protein MxiA (mxiA) from Shigella flexneri.